Here is a 119-residue protein sequence, read N- to C-terminus: C-C motif chemokine 24 (119 aa).

Residues 1 to 26 (MAGSATIVAGLLLLVACACCIFPIDS) form the signal peptide. 2 disulfide bridges follow: cysteine 33-cysteine 58 and cysteine 34-cysteine 74. Asparagine 54 and asparagine 115 each carry an N-linked (GlcNAc...) asparagine glycan. The disordered stretch occupies residues 96–119 (PSKGAKAVRTKFAVQRRRGNSTEV). Residues 101–119 (KAVRTKFAVQRRRGNSTEV) show a composition bias toward basic residues.

The protein belongs to the intercrine beta (chemokine CC) family. As to expression, highest expression in jejunum and spleen. Lower levels found in liver and lung. No expression detected in kidney, thymus, brain or testis.

It is found in the secreted. Chemotactic for resting T-lymphocytes, and eosinophils. Has lower chemotactic activity for neutrophils but none for monocytes and activated lymphocytes. Is a strong suppressor of colony formation by a multipotential hematopoietic progenitor cell line. Binds to CCR3. The chain is C-C motif chemokine 24 from Mus musculus (Mouse).